Reading from the N-terminus, the 282-residue chain is Armadillo repeat-containing protein 1 (282 aa).

Met-1 is modified (N-acetylmethionine). One copy of the ARM repeat lies at 39–81 (GCLPGLILFMDHPNPPVVHSALLALRYLAECRANREKMKGELG). Thr-137 carries the phosphothreonine modification. A phosphoserine mark is found at Ser-189, Ser-246, Ser-260, and Ser-267. The interval 239 to 261 (DYLPEDESPTKEQDKAVSRVGSH) is disordered. The span at 246 to 255 (SPTKEQDKAV) shows a compositional bias: basic and acidic residues.

Interacts with mitochondrial contact site and cristae organizing system (MICOS) complex components IMMT/MIC60 and MICOS10/MIC10. Interacts with mitochondrial outer membrane sorting assembly machinery (SAM) complex components SAMM50 and MTX1.

The protein resides in the cytoplasm. It localises to the mitochondrion. Its subcellular location is the mitochondrion outer membrane. In association with mitochondrial contact site and cristae organizing system (MICOS) complex components and mitochondrial outer membrane sorting assembly machinery (SAM) complex components may regulate mitochondrial dynamics playing a role in determining mitochondrial length, distribution and motility. The chain is Armadillo repeat-containing protein 1 (ARMC1) from Bos taurus (Bovine).